The chain runs to 861 residues: MPILLFLIDTSASMNQRTDLGTSYLDIAKGAVELFLKLRARDPASRGDRYMLVTYDEPPYCIKAGWKENHATFMNELKNLQASGLTTLGQALRSSFDLLNLNRLISGIDNYGQGRNPFFLEPSILITITDGNKLTSTASVQEELHLPLNSPLPGSELTKEPFRWDQRLFALVLRLPGVASTEPEQLGSVPSDESAITQMCEVTGGRSYCVRTQRMLNQCLESLVQKVQSGVVINFEKTGPDPLPVGEDTLMELCRPSNLFAAQPWHSCHKLIYVRPNSKTGVPVGHWPIPESFWPEQNLPSLPPRTSHPVVRFSCVDCEPMVIDKLPFDKYELEPSPLTQYILERKSPHTCWQVFVTSSSKYNELGYPFGYLKASTTLTCVNLFVMPYNYPVLLPLLDDLFKVHKLKPNLKWRQAFDSYLKTLPPYYLITKLESDQILASVGKKPPQEIGIKVKNHSACGLPLAHNKSFRKLLKEIIGESAPRLTELNPKEFAGFQVGLLNKDLKPQTYRNAYDIPRRGLLDQLTRMRSNLLQTRKFIVGQDEDSLHSVPVAQMGNYQEYLKMLASPLRELDPDQPKRLHTFGNPFKQDKKGMMIDEADEFVVGPQNKVKRPGEPNSPMSSKRRRSMSLLLRRAQTAPTVTNHVGGKGPLSASWFPSCPSLVKHTFGHPDTTVIHDTHEEKMENGQSPPDGFLLKSAPAEFMNVSGESFISSQLDSLSDDFTGLRKDGFIHKPGNNILLGGAKTCSLSVADQKITMASALETVPNSMQITPAMAQGINADIKHQLMKEVRKFGRKYERIFILLEEVQGPLETKKQFVEFTIKEAARFKRRVLIQYLEKVLEKIDSHHLLNNVNHINSRSSC.

The 225-residue stretch at 3 to 227 (ILLFLIDTSA…QCLESLVQKV (225 aa)) folds into the VWFA domain. Ser-617 carries the phosphoserine modification.

In Mus musculus (Mouse), this protein is Integrator complex subunit 6-like (Ints6l).